Consider the following 261-residue polypeptide: Cytochrome c oxidase subunit 3 (261 aa).

The Mitochondrial matrix portion of the chain corresponds to 1 to 15 (MAHQAHAYHMVDPSP). Residues 16 to 34 (WPLTGAIAALLLTSGTAVW) form a helical membrane-spanning segment. The Mitochondrial intermembrane segment spans residues 35–40 (FHFHSL). Residues 41–66 (TLLTLGNILLLLTMYQWWRDIIREGT) traverse the membrane as a helical segment. The Mitochondrial matrix portion of the chain corresponds to 67–72 (FQGHHT). Residues 73 to 105 (PPVQKGLRYGMILFITSEVFFFLGFFWAFYHAS) form a helical membrane-spanning segment. Topologically, residues 106–128 (LAPTPELGGCWPPAGITTLDPFE) are mitochondrial intermembrane. A helical transmembrane segment spans residues 129–152 (VPLLNTAVLLASGVTVTWAHHSIM). Residues 153-155 (EGE) are Mitochondrial matrix-facing. Residues 156–183 (RKQTIQALTLTILLGFYFTFLQGMEYYE) traverse the membrane as a helical segment. Residues 184-190 (APFTIAD) are Mitochondrial intermembrane-facing. Residues 191–223 (GVYGSTFFVATGFHGLHVIIGSTFLAVCLLRQV) traverse the membrane as a helical segment. Topologically, residues 224-232 (QYHFTSEHH) are mitochondrial matrix. Residues 233 to 256 (FGFEAAAWYWHFVDVVWLFLYVSI) form a helical membrane-spanning segment. Over 257–261 (YWWGS) the chain is Mitochondrial intermembrane.

The protein belongs to the cytochrome c oxidase subunit 3 family. In terms of assembly, component of the cytochrome c oxidase (complex IV, CIV), a multisubunit enzyme composed of 14 subunits. The complex is composed of a catalytic core of 3 subunits MT-CO1, MT-CO2 and MT-CO3, encoded in the mitochondrial DNA, and 11 supernumerary subunits COX4I, COX5A, COX5B, COX6A, COX6B, COX6C, COX7A, COX7B, COX7C, COX8 and NDUFA4, which are encoded in the nuclear genome. The complex exists as a monomer or a dimer and forms supercomplexes (SCs) in the inner mitochondrial membrane with NADH-ubiquinone oxidoreductase (complex I, CI) and ubiquinol-cytochrome c oxidoreductase (cytochrome b-c1 complex, complex III, CIII), resulting in different assemblies (supercomplex SCI(1)III(2)IV(1) and megacomplex MCI(2)III(2)IV(2)).

Its subcellular location is the mitochondrion inner membrane. The enzyme catalyses 4 Fe(II)-[cytochrome c] + O2 + 8 H(+)(in) = 4 Fe(III)-[cytochrome c] + 2 H2O + 4 H(+)(out). Functionally, component of the cytochrome c oxidase, the last enzyme in the mitochondrial electron transport chain which drives oxidative phosphorylation. The respiratory chain contains 3 multisubunit complexes succinate dehydrogenase (complex II, CII), ubiquinol-cytochrome c oxidoreductase (cytochrome b-c1 complex, complex III, CIII) and cytochrome c oxidase (complex IV, CIV), that cooperate to transfer electrons derived from NADH and succinate to molecular oxygen, creating an electrochemical gradient over the inner membrane that drives transmembrane transport and the ATP synthase. Cytochrome c oxidase is the component of the respiratory chain that catalyzes the reduction of oxygen to water. Electrons originating from reduced cytochrome c in the intermembrane space (IMS) are transferred via the dinuclear copper A center (CU(A)) of subunit 2 and heme A of subunit 1 to the active site in subunit 1, a binuclear center (BNC) formed by heme A3 and copper B (CU(B)). The BNC reduces molecular oxygen to 2 water molecules using 4 electrons from cytochrome c in the IMS and 4 protons from the mitochondrial matrix. The sequence is that of Cytochrome c oxidase subunit 3 (mt-co3) from Oncorhynchus mykiss (Rainbow trout).